Reading from the N-terminus, the 223-residue chain is Cytidylate kinase (223 aa).

Position 12-20 (12-20) interacts with ATP; that stretch reads GPAGSGKST.

Belongs to the cytidylate kinase family. Type 1 subfamily.

Its subcellular location is the cytoplasm. The catalysed reaction is CMP + ATP = CDP + ADP. The enzyme catalyses dCMP + ATP = dCDP + ADP. This is Cytidylate kinase from Aster yellows witches'-broom phytoplasma (strain AYWB).